Reading from the N-terminus, the 669-residue chain is Small ribosomal subunit protein mS39 (669 aa).

A mitochondrion-targeting transit peptide spans 1–13 (MAAPCVRLGSVRC). PPR repeat units follow at residues 129-163 (IEGV…GTAP), 164-199 (SLET…DDQD), 209-239 (RPGQ…MPER), 240-274 (NAHS…RLTA), 275-314 (DVQT…NVRP), 315-351 (NLLT…NIEP), 352-392 (SLGT…FTLR), 396-430 (DVYF…DNRG), 438-472 (QSTY…LYYP), 473-507 (NSRG…GHSN), and 556-590 (SSAS…HRVP). The interval 186–218 (DIQTSEQNQQDDQDQQETEDSKKRPGQYRKASE) is disordered. The span at 194–203 (QQDDQDQQET) shows a compositional bias: acidic residues. A disordered region spans residues 648–669 (EDLQKSHSSSSSSSESSDSDRE). Low complexity predominate over residues 653-663 (SHSSSSSSSES).

Belongs to the mitochondrion-specific ribosomal protein mS39 family.

It is found in the mitochondrion. In terms of biological role, mitochondrial protein that may have a role in mitochondrial translation. This Xenopus laevis (African clawed frog) protein is Small ribosomal subunit protein mS39 (ptcd3).